Reading from the N-terminus, the 189-residue chain is Elongation factor P (189 aa).

This sequence belongs to the elongation factor P family.

The protein localises to the cytoplasm. The protein operates within protein biosynthesis; polypeptide chain elongation. In terms of biological role, involved in peptide bond synthesis. Stimulates efficient translation and peptide-bond synthesis on native or reconstituted 70S ribosomes in vitro. Probably functions indirectly by altering the affinity of the ribosome for aminoacyl-tRNA, thus increasing their reactivity as acceptors for peptidyl transferase. In Rhizobium etli (strain CIAT 652), this protein is Elongation factor P.